The sequence spans 430 residues: DD-carboxypeptidase/endopeptidase Mpg (430 aa).

3 residues coordinate Zn(2+): H295, D299, and H375.

This sequence belongs to the peptidase M23B family. In terms of assembly, monomer. Requires Zn(2+) as cofactor. In terms of processing, likely to be synthesized as a proenzyme. The cleavage of the N-terminal domain is probably required for the activation of the enzyme.

It is found in the cell outer membrane. Its function is as follows. Has both endopeptidase and DD-carboxypeptidase activities. Degrades cell wall peptidoglycan (PG) to allow consummate expression of pili. In Neisseria meningitidis serogroup B (strain ATCC 13091 / M2091), this protein is DD-carboxypeptidase/endopeptidase Mpg.